The chain runs to 422 residues: UDP-N-acetylglucosamine 1-carboxyvinyltransferase (422 aa).

Residue 22–23 participates in phosphoenolpyruvate binding; the sequence is KN. Arg95 lines the UDP-N-acetyl-alpha-D-glucosamine pocket. Catalysis depends on Cys119, which acts as the Proton donor. The residue at position 119 (Cys119) is a 2-(S-cysteinyl)pyruvic acid O-phosphothioketal. Residues 124 to 128, Asp309, and Val331 each bind UDP-N-acetyl-alpha-D-glucosamine; that span reads RPIDQ.

Belongs to the EPSP synthase family. MurA subfamily.

Its subcellular location is the cytoplasm. The enzyme catalyses phosphoenolpyruvate + UDP-N-acetyl-alpha-D-glucosamine = UDP-N-acetyl-3-O-(1-carboxyvinyl)-alpha-D-glucosamine + phosphate. It functions in the pathway cell wall biogenesis; peptidoglycan biosynthesis. In terms of biological role, cell wall formation. Adds enolpyruvyl to UDP-N-acetylglucosamine. This chain is UDP-N-acetylglucosamine 1-carboxyvinyltransferase, found in Anaeromyxobacter sp. (strain K).